The following is an 82-amino-acid chain: MDYIISPIVTEKTTLMMEKENKITFLVNRKATKEAIKNEVEARFNVKVAKVNMMIAKNGKKAIVTLAKDFSAEEVGGRMGIF.

It belongs to the universal ribosomal protein uL23 family. In terms of assembly, part of the 50S ribosomal subunit. Contacts protein L29.

Functionally, binds to 23S rRNA. One of the proteins that surrounds the polypeptide exit tunnel on the outside of the ribosome. This Picrophilus torridus (strain ATCC 700027 / DSM 9790 / JCM 10055 / NBRC 100828 / KAW 2/3) protein is Large ribosomal subunit protein uL23.